A 172-amino-acid polypeptide reads, in one-letter code: Small t antigen (172 aa).

An N-acetylmethionine; by host modification is found at Met1. Residues 12-75 (ELMDLLGLER…VKVAHQPDFG (64 aa)) form the J domain. A C4-type; atypical zinc finger spans residues 101-114 (CSKKPSVHCPCMLC). The H1C3-type; atypical zinc finger occupies 120–141 (HLNRKFLRKEPLVWIDCYCIDC).

As to quaternary structure, interacts with host PPP2R1A; the interaction inhibits PP2A activity.

It localises to the host cytoplasm. The protein resides in the host nucleus. Promotes efficient viral genome replication by accelerating both G1 and S phase progression of the cell cycle. Inhibits host PP2A by binding to the A subunit, thereby displacing lower affinity regulatory B subunit. Inactivation of PP2A in turn results in the transactivation of cyclin A and cyclin D1 promoters. Late during the infection cycle, ST may induce dephosphorylation of host MTOR, leading to the inhibition of cap-dependent translation. May establish and maintain high levels of viral genomes during persistent infection in cell culture. The polypeptide is Small t antigen (BK polyomavirus (strain AS) (BKPyV)).